A 549-amino-acid polypeptide reads, in one-letter code: DDB1- and CUL4-associated factor 11 (549 aa).

Residues 1 to 24 (MGSRNSSSAGSGSLEPSEGLSRRG) show a composition bias toward low complexity. Residues 1–40 (MGSRNSSSAGSGSLEPSEGLSRRGAGLRRSEEEEEEDEDV) form a disordered region. Phosphoserine is present on residues S73 and S75. Positions 80–89 (DSAWDGRLGD) are enriched in basic and acidic residues. The tract at residues 80–100 (DSAWDGRLGDRYNPPVDATPD) is disordered. WD repeat units follow at residues 170–210 (TYSQ…HKFK), 216–258 (DVGW…TALD), 263–302 (ERRFAVFSIAVSSDGREVLGGANDGCLYVFDREQNRRTLQ), 305–345 (SHED…EDDP), 353–392 (GHQDGITFIDSKGDARYLISNSKDQTIKLWDIRRFSSREG), 435–480 (GVLH…KKLT), and 481–520 (NHKACVRDVSWHPFEEKIVSSSWDGSLRLWQYRQAEYFQD).

As to quaternary structure, interacts with DDB1 and CUL4A.

The protein operates within protein modification; protein ubiquitination. May function as a substrate receptor for CUL4-DDB1 E3 ubiquitin-protein ligase complex. In Rattus norvegicus (Rat), this protein is DDB1- and CUL4-associated factor 11 (Dcaf11).